The primary structure comprises 480 residues: Glutamate--tRNA ligase (480 aa).

The 'HIGH' region motif lies at 21–31 (PSPTGYLHVGG). Zn(2+) is bound by residues C110, C112, C137, and H139. Positions 248-252 (KLSKR) match the 'KMSKS' region motif. K251 is a binding site for ATP.

The protein belongs to the class-I aminoacyl-tRNA synthetase family. Glutamate--tRNA ligase type 1 subfamily. As to quaternary structure, monomer. The cofactor is Zn(2+).

It localises to the cytoplasm. It carries out the reaction tRNA(Glu) + L-glutamate + ATP = L-glutamyl-tRNA(Glu) + AMP + diphosphate. Catalyzes the attachment of glutamate to tRNA(Glu) in a two-step reaction: glutamate is first activated by ATP to form Glu-AMP and then transferred to the acceptor end of tRNA(Glu). The sequence is that of Glutamate--tRNA ligase from Mannheimia succiniciproducens (strain KCTC 0769BP / MBEL55E).